A 404-amino-acid polypeptide reads, in one-letter code: Multidrug resistance protein MdtG (404 aa).

11 helical membrane passes run L19–V39, L56–A76, L90–I110, A113–V133, T144–A164, P171–I191, L222–L242, I254–P274, I288–T308, F317–N337, and A376–L396.

Belongs to the major facilitator superfamily. DHA1 family. MdtG (TC 2.A.1.2.20) subfamily.

It is found in the cell inner membrane. This Salmonella choleraesuis (strain SC-B67) protein is Multidrug resistance protein MdtG.